A 167-amino-acid chain; its full sequence is NAD(P)H-quinone oxidoreductase subunit I, chloroplastic (167 aa).

4Fe-4S ferredoxin-type domains follow at residues 55–84 (GRIH…VDWK) and 95–124 (LNYS…MTEE). [4Fe-4S] cluster-binding residues include Cys-64, Cys-67, Cys-70, Cys-74, Cys-104, Cys-107, Cys-110, and Cys-114.

This sequence belongs to the complex I 23 kDa subunit family. As to quaternary structure, NDH is composed of at least 16 different subunits, 5 of which are encoded in the nucleus. It depends on [4Fe-4S] cluster as a cofactor.

The protein resides in the plastid. Its subcellular location is the chloroplast thylakoid membrane. The catalysed reaction is a plastoquinone + NADH + (n+1) H(+)(in) = a plastoquinol + NAD(+) + n H(+)(out). The enzyme catalyses a plastoquinone + NADPH + (n+1) H(+)(in) = a plastoquinol + NADP(+) + n H(+)(out). Functionally, NDH shuttles electrons from NAD(P)H:plastoquinone, via FMN and iron-sulfur (Fe-S) centers, to quinones in the photosynthetic chain and possibly in a chloroplast respiratory chain. The immediate electron acceptor for the enzyme in this species is believed to be plastoquinone. Couples the redox reaction to proton translocation, and thus conserves the redox energy in a proton gradient. This Gossypium barbadense (Sea Island cotton) protein is NAD(P)H-quinone oxidoreductase subunit I, chloroplastic.